The chain runs to 209 residues: Uracil phosphoribosyltransferase (209 aa).

Residues Arg-79, Arg-104, and 131–139 (DPMLATGNS) each bind 5-phospho-alpha-D-ribose 1-diphosphate. Residues Ile-194 and 199–201 (GDA) contribute to the uracil site. Residue Asp-200 participates in 5-phospho-alpha-D-ribose 1-diphosphate binding.

The protein belongs to the UPRTase family. Mg(2+) is required as a cofactor.

It catalyses the reaction UMP + diphosphate = 5-phospho-alpha-D-ribose 1-diphosphate + uracil. Its pathway is pyrimidine metabolism; UMP biosynthesis via salvage pathway; UMP from uracil: step 1/1. Allosterically activated by GTP. Functionally, catalyzes the conversion of uracil and 5-phospho-alpha-D-ribose 1-diphosphate (PRPP) to UMP and diphosphate. The polypeptide is Uracil phosphoribosyltransferase (Rhizobium leguminosarum bv. trifolii (strain WSM2304)).